Here is a 185-residue protein sequence, read N- to C-terminus: Ribosome-recycling factor (185 aa).

This sequence belongs to the RRF family.

The protein resides in the cytoplasm. Responsible for the release of ribosomes from messenger RNA at the termination of protein biosynthesis. May increase the efficiency of translation by recycling ribosomes from one round of translation to another. In Enterobacter sp. (strain 638), this protein is Ribosome-recycling factor.